A 273-amino-acid polypeptide reads, in one-letter code: 4-hydroxy-tetrahydrodipicolinate reductase (273 aa).

Residues 8-13, E34, 102-104, and 128-131 each bind NAD(+); these read GAAGRM, GTT, and SSNM. H160 (proton donor/acceptor) is an active-site residue. Residue H161 coordinates (S)-2,3,4,5-tetrahydrodipicolinate. The Proton donor role is filled by K164. Residue 170 to 171 coordinates (S)-2,3,4,5-tetrahydrodipicolinate; the sequence is GT.

Belongs to the DapB family.

Its subcellular location is the cytoplasm. The catalysed reaction is (S)-2,3,4,5-tetrahydrodipicolinate + NAD(+) + H2O = (2S,4S)-4-hydroxy-2,3,4,5-tetrahydrodipicolinate + NADH + H(+). The enzyme catalyses (S)-2,3,4,5-tetrahydrodipicolinate + NADP(+) + H2O = (2S,4S)-4-hydroxy-2,3,4,5-tetrahydrodipicolinate + NADPH + H(+). Its pathway is amino-acid biosynthesis; L-lysine biosynthesis via DAP pathway; (S)-tetrahydrodipicolinate from L-aspartate: step 4/4. In terms of biological role, catalyzes the conversion of 4-hydroxy-tetrahydrodipicolinate (HTPA) to tetrahydrodipicolinate. The polypeptide is 4-hydroxy-tetrahydrodipicolinate reductase (Methanobrevibacter smithii (strain ATCC 35061 / DSM 861 / OCM 144 / PS)).